A 362-amino-acid chain; its full sequence is Putative RING-H2 finger protein ATL21B (362 aa).

Positions 1-23 are cleaved as a signal peptide; sequence MIISKQLFLLFFLLFFIFPLRHA. The helical transmembrane segment at 234-254 threads the bilayer; it reads VVAVLICLSIIGAVILFVTCI. An RING-type; atypical zinc finger spans residues 316–358; that stretch reads CPICLSEYVSKETVRFIPECDHCFHAKCIDVWLKIHGSCPLCR.

It belongs to the RING-type zinc finger family. ATL subfamily.

It is found in the membrane. It catalyses the reaction S-ubiquitinyl-[E2 ubiquitin-conjugating enzyme]-L-cysteine + [acceptor protein]-L-lysine = [E2 ubiquitin-conjugating enzyme]-L-cysteine + N(6)-ubiquitinyl-[acceptor protein]-L-lysine.. Its pathway is protein modification; protein ubiquitination. This Arabidopsis thaliana (Mouse-ear cress) protein is Putative RING-H2 finger protein ATL21B (ATL21B).